The chain runs to 160 residues: Cyclic pyranopterin monophosphate synthase (160 aa).

Substrate-binding positions include 77–79 (MCH) and 114–115 (ME). Residue Asp129 is part of the active site.

It belongs to the MoaC family. As to quaternary structure, homohexamer; trimer of dimers.

The catalysed reaction is (8S)-3',8-cyclo-7,8-dihydroguanosine 5'-triphosphate = cyclic pyranopterin phosphate + diphosphate. It functions in the pathway cofactor biosynthesis; molybdopterin biosynthesis. In terms of biological role, catalyzes the conversion of (8S)-3',8-cyclo-7,8-dihydroguanosine 5'-triphosphate to cyclic pyranopterin monophosphate (cPMP). The polypeptide is Cyclic pyranopterin monophosphate synthase (Listeria monocytogenes serotype 4a (strain HCC23)).